Reading from the N-terminus, the 232-residue chain is MLTKRIIPCLDVTAGRVVKGVNFVSLTDVGDPVEIAKAYNEAGADELVFLDITATVELRQTMIDVVERTAEQVFIPLTVGGGISSVSDMKELLQAGADKISLNSAAIKRPDLIQEGADKFGNQCIVVAIDAKWNGTNWSVFTRGGRNDTGLDAITWAKKAVQLGAGEILLTSMDGDGTKNGYDIPLTKAISEAVSVPVIASGGCGNAAHMAEVFEKQTQPPHSPQVFFTTAN.

Residues D11 and D130 contribute to the active site.

This sequence belongs to the HisA/HisF family. Heterodimer of HisH and HisF.

Its subcellular location is the cytoplasm. It catalyses the reaction 5-[(5-phospho-1-deoxy-D-ribulos-1-ylimino)methylamino]-1-(5-phospho-beta-D-ribosyl)imidazole-4-carboxamide + L-glutamine = D-erythro-1-(imidazol-4-yl)glycerol 3-phosphate + 5-amino-1-(5-phospho-beta-D-ribosyl)imidazole-4-carboxamide + L-glutamate + H(+). It participates in amino-acid biosynthesis; L-histidine biosynthesis; L-histidine from 5-phospho-alpha-D-ribose 1-diphosphate: step 5/9. In terms of biological role, IGPS catalyzes the conversion of PRFAR and glutamine to IGP, AICAR and glutamate. The HisF subunit catalyzes the cyclization activity that produces IGP and AICAR from PRFAR using the ammonia provided by the HisH subunit. The protein is Imidazole glycerol phosphate synthase subunit HisF of Listeria monocytogenes serotype 4a (strain HCC23).